Reading from the N-terminus, the 192-residue chain is HTH-type transcriptional regulator Hpr (192 aa).

One can recognise an HTH marR-type domain in the interval 12–156 (SIIFSHKFAQ…LLSIVRHVYG (145 aa)). The H-T-H motif DNA-binding region spans 62–85 (ISDIAKFGVMHVSTAFNFSKKLEE).

Homodimer.

Negative regulator of protease production and sporulation. This is HTH-type transcriptional regulator Hpr from Halalkalibacterium halodurans (strain ATCC BAA-125 / DSM 18197 / FERM 7344 / JCM 9153 / C-125) (Bacillus halodurans).